The sequence spans 369 residues: Peridinin-chlorophyll a-binding protein 2, chloroplastic (369 aa).

The transit peptide at 1–56 (MVRSGKKAVVLATVAFCATSVVQKTCGFVPSPLRQRAAAAGAAASVATMFAPAAFA) directs the protein to the chloroplast. 2 consecutive repeat copies span residues 57–219 (DEIG…VPSG) and 220–369 (DTIG…AAQR).

Homotrimer.

The protein localises to the plastid. Its subcellular location is the chloroplast. Its function is as follows. Water-soluble antenna for capture of solar energy in the blue-green range. Peridinin is an asymmetric carotenoid. The polypeptide is Peridinin-chlorophyll a-binding protein 2, chloroplastic (Amphidinium carterae (Dinoflagellate)).